Reading from the N-terminus, the 141-residue chain is Nucleoside diphosphate kinase (141 aa).

ATP-binding residues include Lys11, Phe59, Arg87, Thr93, Arg104, and Asn114. The Pros-phosphohistidine intermediate role is filled by His117.

This sequence belongs to the NDK family. Homotetramer. Requires Mg(2+) as cofactor.

It is found in the cytoplasm. It carries out the reaction a 2'-deoxyribonucleoside 5'-diphosphate + ATP = a 2'-deoxyribonucleoside 5'-triphosphate + ADP. It catalyses the reaction a ribonucleoside 5'-diphosphate + ATP = a ribonucleoside 5'-triphosphate + ADP. Major role in the synthesis of nucleoside triphosphates other than ATP. The ATP gamma phosphate is transferred to the NDP beta phosphate via a ping-pong mechanism, using a phosphorylated active-site intermediate. In Nitrosomonas europaea (strain ATCC 19718 / CIP 103999 / KCTC 2705 / NBRC 14298), this protein is Nucleoside diphosphate kinase.